A 219-amino-acid polypeptide reads, in one-letter code: Probable transcriptional regulator flp (219 aa).

The HTH crp-type domain occupies 144-212 (DSINVRLTHY…GKQVRILNAE (69 aa)). The H-T-H motif DNA-binding region spans 191-210 (KRLAEEKLIERSGKQVRILN).

In Lacticaseibacillus casei (Lactobacillus casei), this protein is Probable transcriptional regulator flp (flp).